A 432-amino-acid chain; its full sequence is Nuclear pore complex-interacting protein family member B9 (432 aa).

2 disordered regions span residues 260–280 and 353–420; these read RMGR…NSLS and SPLP…LRTR. Positions 270–280 are enriched in polar residues; sequence QQHSITDNSLS. Residues 374–402 are compositionally biased toward basic and acidic residues; the sequence is EVEKPPKPKRWRVDEVEQSPKPKRQREAE. Residues 408–420 are compositionally biased toward basic residues; the sequence is KPKRRRLSKLRTR.

Belongs to the NPIP family.

This chain is Nuclear pore complex-interacting protein family member B9 (NPIPB9), found in Homo sapiens (Human).